We begin with the raw amino-acid sequence, 226 residues long: Transcriptional regulatory protein DpiA (226 aa).

The region spanning 6–122 (TLLIVEDETP…RLGQTLTRFR (117 aa)) is the Response regulatory domain. Asp57 carries the post-translational modification 4-aspartylphosphate. The segment at residues 180-199 (AETVAQALTISRTTARRYLE) is a DNA-binding region (H-T-H motif).

Phosphorylated and activated by DpiB.

It is found in the cytoplasm. Member of the two-component regulatory system DpiA/DpiB, which is essential for expression of citrate-specific fermentation genes and genes involved in plasmid inheritance. Could be involved in response to both the presence of citrate and external redox conditions. This chain is Transcriptional regulatory protein DpiA (dpiA), found in Escherichia coli O157:H7.